The primary structure comprises 178 residues: METLYTERLTLRKMELEDADVLCQYWSDPEVTKYMNITPFTDVSQARDMIQMINDLSLEGQANRFSIIVKETDEVIGTCGFNMIDQENGRAEIGYDLGRNHWGKGFASEAVQKLIDYGFTSLNLNRIEAKVEPENTPSIKLLNSLSFQKEGLLRDYEKAKGRLIDVYMFSLLKREYAG.

Residues 9 to 173 (LTLRKMELED…IDVYMFSLLK (165 aa)) form the N-acetyltransferase domain.

This is an uncharacterized protein from Bacillus licheniformis.